The chain runs to 299 residues: Taste receptor type 2 member 4 (299 aa).

Topologically, residues 1–9 (MLRLFYFSA) are extracellular. A helical membrane pass occupies residues 10–30 (IIASVILNFVGIIMNLFITVV). The Cytoplasmic portion of the chain corresponds to 31 to 46 (NCKTWVKSHRISSSDR). Residues 47-67 (ILFSLGITRFLMLGLFLVNTI) form a helical membrane-spanning segment. Topologically, residues 68–81 (YFVSSNTERSVYLS) are extracellular. The helical transmembrane segment at 82-102 (AFFVLCFMFLDSSSLWFVTLL) threads the bilayer. The Cytoplasmic portion of the chain corresponds to 103 to 131 (NILYCVKITNFQHSVFLLLKRNISPKIPR). A helical transmembrane segment spans residues 132-152 (LLLACVLISAFTTCLYITLSQ). At 153–172 (ASPFPELVTTRNNTSFNINE) the chain is on the extracellular side. Asn-164 and Asn-165 each carry an N-linked (GlcNAc...) asparagine glycan. A helical membrane pass occupies residues 173–193 (GILSLVVSLVLSSSLQFIINV). At 194-230 (TSASLLIHSLRRHIQKMQKNATGFWNPQTEAHVGAMK) the chain is on the cytoplasmic side. A helical membrane pass occupies residues 231–251 (LMVYFLILYIPYSVATLVQYL). At 252–262 (PFYAGMDMGTK) the chain is on the extracellular side. Residues 263–283 (SICLIFATLYSPGHSVLIIIT) form a helical membrane-spanning segment. Residues 284–299 (HPKLKTTAKKILCFKK) are Cytoplasmic-facing.

The protein belongs to the G-protein coupled receptor T2R family.

It is found in the membrane. The protein resides in the cell projection. It localises to the cilium membrane. Gustducin-coupled receptor implicated in the perception of bitter compounds in the oral cavity and the gastrointestinal tract. Signals through PLCB2 and the calcium-regulated cation channel TRPM5. In airway epithelial cells, binding of denatonium increases the intracellular calcium ion concentration and stimulates ciliary beat frequency. This is Taste receptor type 2 member 4 (TAS2R4) from Pan paniscus (Pygmy chimpanzee).